A 222-amino-acid chain; its full sequence is 7-cyano-7-deazaguanine synthase (222 aa).

7-17 (LSGGLDSSTVL) serves as a coordination point for ATP. Residues Cys-191, Cys-199, Cys-202, and Cys-205 each coordinate Zn(2+).

Belongs to the QueC family. It depends on Zn(2+) as a cofactor.

It carries out the reaction 7-carboxy-7-deazaguanine + NH4(+) + ATP = 7-cyano-7-deazaguanine + ADP + phosphate + H2O + H(+). It participates in purine metabolism; 7-cyano-7-deazaguanine biosynthesis. Its function is as follows. Catalyzes the ATP-dependent conversion of 7-carboxy-7-deazaguanine (CDG) to 7-cyano-7-deazaguanine (preQ(0)). This Trichodesmium erythraeum (strain IMS101) protein is 7-cyano-7-deazaguanine synthase.